A 278-amino-acid chain; its full sequence is Large ribosomal subunit protein uL2 (278 aa).

Disordered stretches follow at residues Met1–His58 and Gly210–Arg278. The span at Glu23 to Leu33 shows a compositional bias: basic and acidic residues. Low complexity predominate over residues Ser40–Ile49. 2 stretches are compositionally biased toward basic residues: residues Gly210–Ser220 and Val269–Arg278.

It belongs to the universal ribosomal protein uL2 family. As to quaternary structure, part of the 50S ribosomal subunit. Forms a bridge to the 30S subunit in the 70S ribosome.

One of the primary rRNA binding proteins. Required for association of the 30S and 50S subunits to form the 70S ribosome, for tRNA binding and peptide bond formation. It has been suggested to have peptidyltransferase activity; this is somewhat controversial. Makes several contacts with the 16S rRNA in the 70S ribosome. In Beutenbergia cavernae (strain ATCC BAA-8 / DSM 12333 / CCUG 43141 / JCM 11478 / NBRC 16432 / NCIMB 13614 / HKI 0122), this protein is Large ribosomal subunit protein uL2.